The primary structure comprises 380 residues: MGIKGLTKLLADNAPKAMKEQKFESYFGRKIAIDASMSIYQFLIVVGRTGMETLTNEAGEVTSHLQGMFNRTIRLLEAGIKPVYVFDGKPPDMKKEELAKRFSKREDATNDLKEAVEAGDKDAVEKLSKRTVKVTAQHNDDCKRLLRLMGVPVVEAPSEAEAECAALCKNDKVFAVASEDMDSLTFGAPRFLRHLMDPSSKKIPVMEFDVAKVLEELELTMDQFIDLCILCGCDYCDSIKGIGGQTALKLIRQHGSIESILENLNKDRYQIPEDWPYQEARRLFKEPNVTLDVPELKWTPPDEEGLISFLVKDNGFNEDRVTKAIEKIKSAKNKSSQGRLESFFKPVATTSAPLKRKETSDKTSKAAAANKKTKAGGKKK.

The tract at residues 1-105 is N-domain; it reads MGIKGLTKLL…EELAKRFSKR (105 aa). Aspartate 34 provides a ligand contact to Mg(2+). Position 71 (arginine 71) interacts with DNA. The Mg(2+) site is built by aspartate 87, glutamate 159, glutamate 161, aspartate 180, and aspartate 182. The I-domain stretch occupies residues 123–254; sequence AVEKLSKRTV…QTALKLIRQH (132 aa). Glutamate 159 serves as a coordination point for DNA. DNA-binding residues include glycine 232 and aspartate 234. Aspartate 234 is a Mg(2+) binding site. An interaction with PCNA region spans residues 336 to 344; it reads SQGRLESFF. The interval 351–380 is disordered; sequence SAPLKRKETSDKTSKAAAANKKTKAGGKKK. The span at 355-364 shows a compositional bias: basic and acidic residues; that stretch reads KRKETSDKTS. Basic residues predominate over residues 371 to 380; the sequence is KKTKAGGKKK.

This sequence belongs to the XPG/RAD2 endonuclease family. FEN1 subfamily. As to quaternary structure, interacts with PCNA. Three molecules of FEN1 bind to one PCNA trimer with each molecule binding to one PCNA monomer. PCNA stimulates the nuclease activity without altering cleavage specificity. Mg(2+) serves as cofactor. Phosphorylated. Phosphorylation upon DNA damage induces relocalization to the nuclear plasma.

The protein localises to the nucleus. It is found in the nucleolus. The protein resides in the nucleoplasm. Its subcellular location is the mitochondrion. Its function is as follows. Structure-specific nuclease with 5'-flap endonuclease and 5'-3' exonuclease activities involved in DNA replication and repair. During DNA replication, cleaves the 5'-overhanging flap structure that is generated by displacement synthesis when DNA polymerase encounters the 5'-end of a downstream Okazaki fragment. It enters the flap from the 5'-end and then tracks to cleave the flap base, leaving a nick for ligation. Also involved in the long patch base excision repair (LP-BER) pathway, by cleaving within the apurinic/apyrimidinic (AP) site-terminated flap. Acts as a genome stabilization factor that prevents flaps from equilibrating into structures that lead to duplications and deletions. Also possesses 5'-3' exonuclease activity on nicked or gapped double-stranded DNA, and exhibits RNase H activity. Also involved in replication and repair of rDNA and in repairing mitochondrial DNA. In Sorghum bicolor (Sorghum), this protein is Flap endonuclease 1-A.